The following is a 113-amino-acid chain: Large ribosomal subunit protein bL19 (113 aa).

This sequence belongs to the bacterial ribosomal protein bL19 family.

Functionally, this protein is located at the 30S-50S ribosomal subunit interface and may play a role in the structure and function of the aminoacyl-tRNA binding site. This chain is Large ribosomal subunit protein bL19, found in Corynebacterium kroppenstedtii (strain DSM 44385 / JCM 11950 / CIP 105744 / CCUG 35717).